Reading from the N-terminus, the 276-residue chain is MAD2L1-binding protein (276 aa).

Acidic residues predominate over residues Met1–Ser10. Positions Met1 to His30 are disordered. The tract at residues Pro49–Lys81 is interaction with MAD2L1.

It belongs to the MAD2L1BP family. Interacts with MAD2L1.

It is found in the nucleus. The protein resides in the nucleoplasm. The protein localises to the cytoplasm. Its subcellular location is the cytoskeleton. It localises to the spindle. Functionally, may function to silence the spindle checkpoint and allow mitosis to proceed through anaphase by binding MAD2L1 after it has become dissociated from the MAD2L1-CDC20 complex. This is MAD2L1-binding protein (Mad2l1bp) from Mus musculus (Mouse).